The chain runs to 319 residues: L-lactate dehydrogenase (319 aa).

NAD(+) contacts are provided by residues Val-11, Asp-32, Arg-37, Tyr-62, and 76–77 (GV). Substrate is bound by residues Gln-79, Arg-85, and 117-120 (NPVD). NAD(+)-binding positions include 115–117 (VTN) and Ser-140. 145–148 (DTAR) contacts substrate. Residues Arg-150 and His-165 each contribute to the beta-D-fructose 1,6-bisphosphate site. The active-site Proton acceptor is His-172. Tyr-217 carries the post-translational modification Phosphotyrosine. Thr-226 provides a ligand contact to substrate.

Belongs to the LDH/MDH superfamily. LDH family. Homotetramer.

It localises to the cytoplasm. The enzyme catalyses (S)-lactate + NAD(+) = pyruvate + NADH + H(+). The protein operates within fermentation; pyruvate fermentation to lactate; (S)-lactate from pyruvate: step 1/1. With respect to regulation, allosterically activated by fructose 1,6-bisphosphate (FBP). Its function is as follows. Catalyzes the conversion of lactate to pyruvate. The polypeptide is L-lactate dehydrogenase (Thermotoga sp. (strain RQ2)).